Consider the following 235-residue polypeptide: Large ribosomal subunit protein uL1 (235 aa).

The protein belongs to the universal ribosomal protein uL1 family. Part of the 50S ribosomal subunit.

In terms of biological role, binds directly to 23S rRNA. The L1 stalk is quite mobile in the ribosome, and is involved in E site tRNA release. Protein L1 is also a translational repressor protein, it controls the translation of the L11 operon by binding to its mRNA. The sequence is that of Large ribosomal subunit protein uL1 from Mycobacteroides abscessus (strain ATCC 19977 / DSM 44196 / CCUG 20993 / CIP 104536 / JCM 13569 / NCTC 13031 / TMC 1543 / L948) (Mycobacterium abscessus).